A 131-amino-acid polypeptide reads, in one-letter code: MAGIKALISLSFGGAIGLMFLMLGCALPIYNQYWPLFVLFFYILSPIPYCIARRLVDDTDAMSNACKELAIFLTTGIVVSAFGLPVVFARAHLIEWGACALVLTGNTVIFATILGFFLVFGSNDDFSWQQW.

The next 4 helical transmembrane spans lie at 7-27 (LISL…GCAL), 32-52 (QYWP…YCIA), 69-89 (LAIF…VVFA), and 100-120 (ALVL…FLVF).

This sequence belongs to the OB-RGRP/VPS55 family. Interacts with RAB13.

It localises to the membrane. Functionally, negatively regulates growth hormone (GH) receptor cell surface expression in liver. May play a role in liver resistance to GH during periods of reduced nutrient availability. This is Leptin receptor overlapping transcript-like 1 (Leprotl1) from Mus musculus (Mouse).